A 187-amino-acid polypeptide reads, in one-letter code: GTP cyclohydrolase 1 (187 aa).

3 residues coordinate Zn(2+): C76, H79, and C148.

The protein belongs to the GTP cyclohydrolase I family. Toroid-shaped homodecamer, composed of two pentamers of five dimers.

The catalysed reaction is GTP + H2O = 7,8-dihydroneopterin 3'-triphosphate + formate + H(+). It functions in the pathway cofactor biosynthesis; 7,8-dihydroneopterin triphosphate biosynthesis; 7,8-dihydroneopterin triphosphate from GTP: step 1/1. The chain is GTP cyclohydrolase 1 from Acetivibrio thermocellus (strain ATCC 27405 / DSM 1237 / JCM 9322 / NBRC 103400 / NCIMB 10682 / NRRL B-4536 / VPI 7372) (Clostridium thermocellum).